A 100-amino-acid chain; its full sequence is uncharacterized protein (100 aa).

The N-terminal stretch at 1 to 26 (MKRLLVSLRVWMVFLMNWVTPDRKTA) is a signal peptide.

This is an uncharacterized protein from Bacillus subtilis (strain 168).